The chain runs to 282 residues: Dof zinc finger protein 4 (282 aa).

The Dof-type zinc-finger motif lies at 45-99 (VKCPRCESTNTKFCYYNNYNLSQPRHFCKSCRRYWTKGGVLRNVPVGGGCRKTKR). 4 residues coordinate Zn(2+): cysteine 47, cysteine 50, cysteine 72, and cysteine 75. Positions 89–161 (PVGGGCRKTK…TTPATPSSNT (73 aa)) are disordered. Low complexity-rich tracts occupy residues 102–117 (SSSA…TAAT) and 125–161 (RASA…SSNT).

Its subcellular location is the nucleus. In terms of biological role, transcription factor that may transactivate seed storage protein genes in developing seeds. The sequence is that of Dof zinc finger protein 4 from Oryza sativa subsp. japonica (Rice).